The primary structure comprises 200 residues: Pyridoxine/pyridoxamine 5'-phosphate oxidase (200 aa).

Residues 49 to 54 (RMLLLK), 64 to 65 (YT), arginine 70, lysine 71, and glutamine 93 each bind FMN. Lysine 54 lines the substrate pocket. Substrate is bound by residues tyrosine 111, arginine 115, and serine 119. FMN-binding positions include 128–129 (QS) and tryptophan 173. Substrate is bound at residue 179–181 (RLH). Position 183 (arginine 183) interacts with FMN.

The protein belongs to the pyridoxamine 5'-phosphate oxidase family. In terms of assembly, homodimer. The cofactor is FMN.

It catalyses the reaction pyridoxamine 5'-phosphate + O2 + H2O = pyridoxal 5'-phosphate + H2O2 + NH4(+). It carries out the reaction pyridoxine 5'-phosphate + O2 = pyridoxal 5'-phosphate + H2O2. The protein operates within cofactor metabolism; pyridoxal 5'-phosphate salvage; pyridoxal 5'-phosphate from pyridoxamine 5'-phosphate: step 1/1. Its pathway is cofactor metabolism; pyridoxal 5'-phosphate salvage; pyridoxal 5'-phosphate from pyridoxine 5'-phosphate: step 1/1. In terms of biological role, catalyzes the oxidation of either pyridoxine 5'-phosphate (PNP) or pyridoxamine 5'-phosphate (PMP) into pyridoxal 5'-phosphate (PLP). This chain is Pyridoxine/pyridoxamine 5'-phosphate oxidase, found in Gluconobacter oxydans (strain 621H) (Gluconobacter suboxydans).